The chain runs to 792 residues: Xaa-Pro dipeptidyl-peptidase (792 aa).

Active-site charge relay system residues include Ser-363, Asp-482, and His-513.

The protein belongs to the peptidase S15 family. As to quaternary structure, homodimer.

The protein localises to the cytoplasm. The enzyme catalyses Hydrolyzes Xaa-Pro-|- bonds to release unblocked, N-terminal dipeptides from substrates including Ala-Pro-|-p-nitroanilide and (sequentially) Tyr-Pro-|-Phe-Pro-|-Gly-Pro-|-Ile.. Removes N-terminal dipeptides sequentially from polypeptides having unsubstituted N-termini provided that the penultimate residue is proline. The protein is Xaa-Pro dipeptidyl-peptidase (pepX) of Lactobacillus delbrueckii subsp. lactis.